The following is a 172-amino-acid chain: Xanthine-guanine phosphoribosyltransferase (172 aa).

Residues 47-48 (RG) and 106-114 (DDLVDTGKT) contribute to the 5-phospho-alpha-D-ribose 1-diphosphate site. Mg(2+) is bound at residue D107. The guanine site is built by D110 and I153. Xanthine contacts are provided by D110 and I153. GMP-binding positions include 110-114 (DTGKT) and 152-153 (WI).

Belongs to the purine/pyrimidine phosphoribosyltransferase family. XGPT subfamily. As to quaternary structure, homotetramer. The cofactor is Mg(2+).

Its subcellular location is the cell inner membrane. The catalysed reaction is GMP + diphosphate = guanine + 5-phospho-alpha-D-ribose 1-diphosphate. It catalyses the reaction XMP + diphosphate = xanthine + 5-phospho-alpha-D-ribose 1-diphosphate. It carries out the reaction IMP + diphosphate = hypoxanthine + 5-phospho-alpha-D-ribose 1-diphosphate. It functions in the pathway purine metabolism; GMP biosynthesis via salvage pathway; GMP from guanine: step 1/1. Its pathway is purine metabolism; XMP biosynthesis via salvage pathway; XMP from xanthine: step 1/1. In terms of biological role, purine salvage pathway enzyme that catalyzes the transfer of the ribosyl-5-phosphate group from 5-phospho-alpha-D-ribose 1-diphosphate (PRPP) to the N9 position of the 6-oxopurines guanine and xanthine to form the corresponding ribonucleotides GMP (guanosine 5'-monophosphate) and XMP (xanthosine 5'-monophosphate), with the release of PPi. To a lesser extent, also acts on hypoxanthine. This chain is Xanthine-guanine phosphoribosyltransferase, found in Rhodopseudomonas palustris (strain BisB5).